The sequence spans 217 residues: Very-long-chain (3R)-3-hydroxyacyl-CoA dehydratase PHS1 (217 aa).

The Cytoplasmic portion of the chain corresponds to M1 to F11. Residues L12 to L29 form a helical membrane-spanning segment. Topologically, residues V30–K47 are lumenal. The helical transmembrane segment at N48–L66 threads the bilayer. At G67–T76 the chain is on the cytoplasmic side. Residues V77 to L94 traverse the membrane as a helical segment. The Lumenal segment spans residues P95–G99. Residues V100–I117 form a helical membrane-spanning segment. Residues V118–Y142 lie on the Cytoplasmic side of the membrane. Residues N143–I160 form a helical membrane-spanning segment. Residues Y149 and E156 contribute to the active site. The Lumenal segment spans residues Y161–I178. Residues L179–H196 form a helical membrane-spanning segment. Residues M197–I217 lie on the Cytoplasmic side of the membrane. The Endoplasmic reticulum retention signal motif lies at K214–I217.

The protein belongs to the very long-chain fatty acids dehydratase HACD family.

It is found in the endoplasmic reticulum membrane. The protein resides in the vacuole membrane. It carries out the reaction a very-long-chain (3R)-3-hydroxyacyl-CoA = a very-long-chain (2E)-enoyl-CoA + H2O. It catalyses the reaction (3R)-hydroxyeicosanoyl-CoA = (2E)-eicosenoyl-CoA + H2O. The catalysed reaction is (3R)-hydroxydocosanoyl-CoA = (2E)-docosenoyl-CoA + H2O. The enzyme catalyses (3R)-hydroxyoctadecanoyl-CoA = (2E)-octadecenoyl-CoA + H2O. It carries out the reaction (3R)-hydroxytetracosanoyl-CoA = (2E)-tetracosenoyl-CoA + H2O. It catalyses the reaction (3R)-hydroxyhexacosanoyl-CoA = (2E)-hexacosenoyl-CoA + H2O. The catalysed reaction is (3R)-hydroxyhexadecanoyl-CoA = (2E)-hexadecenoyl-CoA + H2O. The protein operates within lipid metabolism; fatty acid biosynthesis. Functionally, catalyzes the third of the four reactions of the long-chain fatty acids elongation cycle. This endoplasmic reticulum-bound enzymatic process, allows the addition of two carbons to the chain of long- and very long-chain fatty acids/VLCFAs per cycle. This enzyme catalyzes the dehydration of the 3-hydroxyacyl-CoA intermediate into trans-2,3-enoyl-CoA, within each cycle of fatty acid elongation. Thereby, it participates in the production of VLCFAs of different chain lengths that are involved in multiple biological processes as precursors of membrane lipids and lipid mediators. The chain is Very-long-chain (3R)-3-hydroxyacyl-CoA dehydratase PHS1 (PHS1) from Saccharomyces cerevisiae (strain ATCC 204508 / S288c) (Baker's yeast).